Consider the following 610-residue polypeptide: Modifier of mdg4 (610 aa).

The self-association stretch occupies residues 1 to 160 (MADDEQFSLC…QQPRASARYK (160 aa)). The interaction with Chi stretch occupies residues 1–308 (MADDEQFSLC…EEAEYIDLPM (308 aa)). Residues 32 to 98 (VDVSLAAEGQ…MYCGEVNVKQ (67 aa)) enclose the BTB domain. Disordered stretches follow at residues 115-156 (GLTD…PRAS), 219-259 (VSTN…DSTT), 311-339 (PTKS…DDTY), and 386-432 (ESSF…PKPK). Positions 122–135 (APQPPQESSPPPAA) are enriched in pro residues. The span at 136 to 156 (PHVQQQQIPAQRVQRQQPRAS) shows a compositional bias: low complexity. Positions 222 to 238 (NKRSAQRSSLTPASSSA) are enriched in polar residues. The residue at position 230 (Ser230) is a Phosphoserine. The segment covering 312-325 (TKSEPDYSEDHGDA) has biased composition (basic and acidic residues). Over residues 386–400 (ESSFVDTSGDQGNTE) the composition is skewed to polar residues. Residues 401–410 (AQAATSASAT) are compositionally biased toward low complexity. The segment covering 422–432 (TKVEDQTPKPK) has biased composition (basic and acidic residues). The FLYWCH-type zinc finger occupies 452 to 512 (YASTTKGGVK…VFPYEGEHVH (61 aa)). The interval 551–610 (LEEADDKEDEDFEEFEIQEIDEIELDEPEKTPAKEEEVDPNDFREKIKRRLQKALQNKKK) is interaction with su(Hw). The segment covering 567–577 (IQEIDEIELDE) has biased composition (acidic residues). The segment at 567–595 (IQEIDEIELDEPEKTPAKEEEVDPNDFRE) is disordered. Basic and acidic residues predominate over residues 578–595 (PEKTPAKEEEVDPNDFRE).

As to quaternary structure, can self-associate. Interacts with Chi. Interacts with Top2. Isoform mod2.2: Component of the gypsy chromatin insulator complex, composed of Cp190, mod(mdg4) and su(Hw). The gypsy chromatin insulator complex interacts with Topors via mod(mdg4) and su(Hw). Isoform mod2.2 interacts with Trl/GAGA and interaction with this protein may bypass the repressive effects of the su(Hw) insulator.

It is found in the nucleus. The protein localises to the chromosome. Its function is as follows. Component of the gypsy chromatin insulator complex which is required for the function of the gypsy chromatin insulator and other endogenous chromatin insulators. Chromatin insulators are regulatory elements which establish independent domains of transcriptional activity within eukaryotic genomes. Insulators have two defining properties; they can block the communication between an enhancer and a promoter when placed between them and can also buffer transgenes from position effect variegation (PEV). Insulators are proposed to structure the chromatin fiber into independent domains of differing transcriptional potential by promoting the formation of distinct chromatin loops. This chromatin looping may involve the formation of insulator bodies, where homotypic interactions between individual subunits of the insulator complex could promote the clustering of widely spaced insulators at the nuclear periphery. Within the gypsy insulator complex, this protein may control the nature of the repressive effect of su(Hw): in the absence of mod(mdg4) protein, su(Hw) exerts a bidirectional silencing effect, whereas in the presence of mod(mdg4), the silencing effect is unidirectional. Isoform H is specifically required to maintain the pairing of achiasmate homologs in male meiosis I which is mediated by the rDNA repeats on the achiasmate X-Y bivalents. Isoform H also plays a role in apoptotic regulatory pathways. The chain is Modifier of mdg4 from Drosophila melanogaster (Fruit fly).